The chain runs to 239 residues: Acyl-protein thioesterase 1 (239 aa).

Active-site charge relay system residues include Ser124, Asp180, and His213.

The protein belongs to the AB hydrolase superfamily. AB hydrolase 2 family.

The protein localises to the cytoplasm. The protein resides in the nucleus. It catalyses the reaction S-hexadecanoyl-L-cysteinyl-[protein] + H2O = L-cysteinyl-[protein] + hexadecanoate + H(+). Its function is as follows. Hydrolyzes fatty acids from S-acylated cysteine residues in proteins with a strong preference for palmitoylated G-alpha proteins over other acyl substrates. Mediates the deacylation of G-alpha proteins such as GPA1 in vivo, but has weak or no activity toward palmitoylated Ras proteins. Has weak lysophospholipase activity in vitro; however such activity may not exist in vivo. The sequence is that of Acyl-protein thioesterase 1 from Emericella nidulans (strain FGSC A4 / ATCC 38163 / CBS 112.46 / NRRL 194 / M139) (Aspergillus nidulans).